The primary structure comprises 141 residues: uncharacterized protein (141 aa).

This is an uncharacterized protein from Methanocaldococcus jannaschii (strain ATCC 43067 / DSM 2661 / JAL-1 / JCM 10045 / NBRC 100440) (Methanococcus jannaschii).